Here is a 265-residue protein sequence, read N- to C-terminus: 4-diphosphocytidyl-2-C-methyl-D-erythritol kinase (265 aa).

Lysine 8 is an active-site residue. 95 to 105 provides a ligand contact to ATP; the sequence is PIGAGLGGGSS. Residue aspartate 135 is part of the active site.

Belongs to the GHMP kinase family. IspE subfamily.

It catalyses the reaction 4-CDP-2-C-methyl-D-erythritol + ATP = 4-CDP-2-C-methyl-D-erythritol 2-phosphate + ADP + H(+). Its pathway is isoprenoid biosynthesis; isopentenyl diphosphate biosynthesis via DXP pathway; isopentenyl diphosphate from 1-deoxy-D-xylulose 5-phosphate: step 3/6. Its function is as follows. Catalyzes the phosphorylation of the position 2 hydroxy group of 4-diphosphocytidyl-2C-methyl-D-erythritol. The sequence is that of 4-diphosphocytidyl-2-C-methyl-D-erythritol kinase from Ureaplasma urealyticum serovar 10 (strain ATCC 33699 / Western).